A 347-amino-acid polypeptide reads, in one-letter code: Chaperone protein DnaJ 1 (347 aa).

Positions 5–75 (DPHSLLGLSP…PAAAPHDAQA (71 aa)) constitute a J domain. Residues 68 to 77 (AAPHDAQAAD) are compositionally biased toward low complexity. Residues 68–91 (AAPHDAQAADARPEPPPEAPPRGA) form a disordered region. The segment at 107–181 (GGEKAFTIAD…CHGSGQARAA (75 aa)) adopts a CR-type zinc-finger fold. 8 residues coordinate Zn(2+): cysteine 120, cysteine 123, cysteine 137, cysteine 140, cysteine 155, cysteine 158, cysteine 169, and cysteine 172. 4 CXXCXGXG motif repeats span residues 120-127 (CGACGGSG), 137-144 (CATCHGSG), 155-162 (CADCAGRG), and 169-176 (CGACHGSG).

It belongs to the DnaJ family. As to quaternary structure, homodimer. It depends on Zn(2+) as a cofactor.

Its subcellular location is the cytoplasm. Functionally, participates actively in the response to hyperosmotic and heat shock by preventing the aggregation of stress-denatured proteins and by disaggregating proteins, also in an autonomous, DnaK-independent fashion. Unfolded proteins bind initially to DnaJ; upon interaction with the DnaJ-bound protein, DnaK hydrolyzes its bound ATP, resulting in the formation of a stable complex. GrpE releases ADP from DnaK; ATP binding to DnaK triggers the release of the substrate protein, thus completing the reaction cycle. Several rounds of ATP-dependent interactions between DnaJ, DnaK and GrpE are required for fully efficient folding. Also involved, together with DnaK and GrpE, in the DNA replication of plasmids through activation of initiation proteins. This is Chaperone protein DnaJ 1 from Aromatoleum aromaticum (strain DSM 19018 / LMG 30748 / EbN1) (Azoarcus sp. (strain EbN1)).